Here is a 216-residue protein sequence, read N- to C-terminus: Uracil phosphoribosyltransferase (216 aa).

Residues R84, R109, and 137–145 (DPMLATGGS) contribute to the 5-phospho-alpha-D-ribose 1-diphosphate site. Residues I202 and 207-209 (GDA) contribute to the uracil site. D208 serves as a coordination point for 5-phospho-alpha-D-ribose 1-diphosphate.

The protein belongs to the UPRTase family. The cofactor is Mg(2+).

It carries out the reaction UMP + diphosphate = 5-phospho-alpha-D-ribose 1-diphosphate + uracil. Its pathway is pyrimidine metabolism; UMP biosynthesis via salvage pathway; UMP from uracil: step 1/1. Its activity is regulated as follows. Allosterically activated by GTP. Catalyzes the conversion of uracil and 5-phospho-alpha-D-ribose 1-diphosphate (PRPP) to UMP and diphosphate. The protein is Uracil phosphoribosyltransferase of Nostoc sp. (strain PCC 7120 / SAG 25.82 / UTEX 2576).